The chain runs to 134 residues: 16 kDa beta-galactoside-binding lectin (134 aa).

M1 carries the post-translational modification N-acetylmethionine. Positions 4–134 (GLVVTQLDVQ…DFKVKAIKFS (131 aa)) constitute a Galectin domain. A beta-D-galactoside is bound at residue 69-75 (WGEEDRK).

As to quaternary structure, homodimer. As to expression, mainly in the liver (adult), mainly in the muscle (embryo).

Functionally, this protein binds beta-galactoside. Its physiological function is not yet known. It may be involved in the regulation of differentiation. In Gallus gallus (Chicken), this protein is 16 kDa beta-galactoside-binding lectin.